A 203-amino-acid chain; its full sequence is Small ribosomal subunit protein uS2 (203 aa).

This sequence belongs to the universal ribosomal protein uS2 family.

This chain is Small ribosomal subunit protein uS2, found in Methanoregula boonei (strain DSM 21154 / JCM 14090 / 6A8).